The primary structure comprises 45 residues: Photosystem II reaction center protein K (45 aa).

Positions 1–8 (MLMSLFLA) are excised as a propeptide. Residues 23 to 43 (ILPIIPLFFLLLAFVWQAAIG) traverse the membrane as a helical segment.

The protein belongs to the PsbK family. In terms of assembly, PSII is composed of 1 copy each of membrane proteins PsbA, PsbB, PsbC, PsbD, PsbE, PsbF, PsbH, PsbI, PsbJ, PsbK, PsbL, PsbM, PsbT, PsbX, PsbY, PsbZ, Psb30/Ycf12, at least 3 peripheral proteins of the oxygen-evolving complex and a large number of cofactors. It forms dimeric complexes.

The protein localises to the plastid. Its subcellular location is the cyanelle thylakoid membrane. Its function is as follows. One of the components of the core complex of photosystem II (PSII). PSII is a light-driven water:plastoquinone oxidoreductase that uses light energy to abstract electrons from H(2)O, generating O(2) and a proton gradient subsequently used for ATP formation. It consists of a core antenna complex that captures photons, and an electron transfer chain that converts photonic excitation into a charge separation. The sequence is that of Photosystem II reaction center protein K from Cyanophora paradoxa.